A 196-amino-acid chain; its full sequence is Pyridoxal 5'-phosphate synthase subunit PdxT (196 aa).

47–49 contributes to the L-glutamine binding site; it reads GES. Cys-79 serves as the catalytic Nucleophile. L-glutamine contacts are provided by residues Arg-106 and 134-135; that span reads IR. Catalysis depends on charge relay system residues His-170 and Glu-172.

The protein belongs to the glutaminase PdxT/SNO family. In terms of assembly, in the presence of PdxS, forms a dodecamer of heterodimers. Only shows activity in the heterodimer.

It catalyses the reaction aldehydo-D-ribose 5-phosphate + D-glyceraldehyde 3-phosphate + L-glutamine = pyridoxal 5'-phosphate + L-glutamate + phosphate + 3 H2O + H(+). The catalysed reaction is L-glutamine + H2O = L-glutamate + NH4(+). Its pathway is cofactor biosynthesis; pyridoxal 5'-phosphate biosynthesis. In terms of biological role, catalyzes the hydrolysis of glutamine to glutamate and ammonia as part of the biosynthesis of pyridoxal 5'-phosphate. The resulting ammonia molecule is channeled to the active site of PdxS. The chain is Pyridoxal 5'-phosphate synthase subunit PdxT from Bacillus licheniformis (strain ATCC 14580 / DSM 13 / JCM 2505 / CCUG 7422 / NBRC 12200 / NCIMB 9375 / NCTC 10341 / NRRL NRS-1264 / Gibson 46).